Reading from the N-terminus, the 364-residue chain is Methylthioribose-1-phosphate isomerase (364 aa).

Residues 53 to 55 (RGA), Arg-90, and Gln-203 contribute to the substrate site. The Proton donor role is filled by Asp-244. 254–255 (NK) is a substrate binding site.

The protein belongs to the eIF-2B alpha/beta/delta subunits family. MtnA subfamily.

The catalysed reaction is 5-(methylsulfanyl)-alpha-D-ribose 1-phosphate = 5-(methylsulfanyl)-D-ribulose 1-phosphate. It participates in amino-acid biosynthesis; L-methionine biosynthesis via salvage pathway; L-methionine from S-methyl-5-thio-alpha-D-ribose 1-phosphate: step 1/6. In terms of biological role, catalyzes the interconversion of methylthioribose-1-phosphate (MTR-1-P) into methylthioribulose-1-phosphate (MTRu-1-P). This Brucella anthropi (strain ATCC 49188 / DSM 6882 / CCUG 24695 / JCM 21032 / LMG 3331 / NBRC 15819 / NCTC 12168 / Alc 37) (Ochrobactrum anthropi) protein is Methylthioribose-1-phosphate isomerase.